A 256-amino-acid polypeptide reads, in one-letter code: Triosephosphate isomerase (256 aa).

9–11 (NWK) provides a ligand contact to substrate. His95 functions as the Electrophile in the catalytic mechanism. The active-site Proton acceptor is Glu167. Substrate-binding positions include Gly173, Ser213, and 234–235 (GG).

It belongs to the triosephosphate isomerase family. In terms of assembly, homodimer.

The protein localises to the cytoplasm. The enzyme catalyses D-glyceraldehyde 3-phosphate = dihydroxyacetone phosphate. It participates in carbohydrate biosynthesis; gluconeogenesis. It functions in the pathway carbohydrate degradation; glycolysis; D-glyceraldehyde 3-phosphate from glycerone phosphate: step 1/1. Involved in the gluconeogenesis. Catalyzes stereospecifically the conversion of dihydroxyacetone phosphate (DHAP) to D-glyceraldehyde-3-phosphate (G3P). This Symbiobacterium thermophilum (strain DSM 24528 / JCM 14929 / IAM 14863 / T) protein is Triosephosphate isomerase.